Reading from the N-terminus, the 145-residue chain is Probable flagellum biosynthesis repressor protein FlbT (145 aa).

The protein belongs to the FlbT family.

Has a post-transcriptional repressor function in flagellum biogenesis. Associates with the 5'-UTR of fljK mRNA and promotes its degradation. This is Probable flagellum biosynthesis repressor protein FlbT from Chelativorans sp. (strain BNC1).